The sequence spans 266 residues: Undecaprenyl-diphosphatase (266 aa).

8 helical membrane-spanning segments follow: residues 1–21 (MDTF…FLPI), 39–59 (QGLS…VMYF), 87–107 (WWII…KGFI), 111–131 (FRSI…LWWA), 144–164 (VGWK…IPGT), 183–203 (AAAR…AILV), 218–238 (ALGL…HYFL), and 246–266 (MTPF…FIFL).

This sequence belongs to the UppP family.

Its subcellular location is the cell inner membrane. The catalysed reaction is di-trans,octa-cis-undecaprenyl diphosphate + H2O = di-trans,octa-cis-undecaprenyl phosphate + phosphate + H(+). Catalyzes the dephosphorylation of undecaprenyl diphosphate (UPP). Confers resistance to bacitracin. This chain is Undecaprenyl-diphosphatase, found in Shewanella halifaxensis (strain HAW-EB4).